A 777-amino-acid polypeptide reads, in one-letter code: Nuclear autoantigenic sperm protein (777 aa).

N-acetylalanine is present on Ala2. Residue Lys34 is modified to N6-acetyllysine. A TPR 1 repeat occupies 44–77 (AKKLLGLGQKHLVMGDIPAAVNAFQEAASLLGKK). Positions 117–128 (EEEEGEKTEEES) are histone-binding. Thr124 is modified (phosphothreonine). Phosphoserine is present on Ser128. Composition is skewed to basic and acidic residues over residues 152–186 (MGEKEAQKTEDKSLVKPEMDKEQETEMEKGGREDM), 227–259 (VTSKKPDQEIPGAEEGKSVSETDVQEECREKGG), and 267–276 (IEEKPKEASK). A disordered region spans residues 152-496 (MGEKEAQKTE…ALENKSLQEN (345 aa)). The histone-binding stretch occupies residues 211-244 (EEGKGAAAPEGLSEAEVTSKKPDQEIPGAEEGKS). Lys243 carries the post-translational modification N6-acetyllysine. The residue at position 244 (Ser244) is a Phosphoserine. Residue Lys285 is modified to N6-acetyllysine. The span at 303–319 (DEPKEQVAASESERGKA) shows a compositional bias: basic and acidic residues. Ser312 is modified (phosphoserine). Residues 342 to 353 (AADASAAEAGSE) are compositionally biased toward low complexity. Ser399, Ser411, and Ser440 each carry phosphoserine. The interval 458-501 (EQMKEGEETEGSEEEDKENDKAEETLNDSALENKSLQENEEEEI) is histone-binding. Over residues 464 to 474 (EETEGSEEEDK) the composition is skewed to acidic residues. The residue at position 466 (Thr466) is a Phosphothreonine. Phosphoserine occurs at positions 469, 486, and 492. The span at 484–493 (NDSALENKSL) shows a compositional bias: polar residues. 2 TPR repeats span residues 531 to 564 (AQAHLKLGEVSVESENYLQAVEEFQACLNLQEQY) and 573 to 606 (AETHYQLGLAYGYNSQYDEAVAQFSKSIEVIEKR). Positions 593–648 (VAQFSKSIEVIEKRMAVLNEQMKEAEGSPTEYEKEIEELKELLPEIREKIEDAKES) form a coiled coil. Position 651 is a phosphoserine (Ser651). The span at 667–681 (STSGFTPSGGSSSVS) shows a compositional bias: low complexity. The disordered stretch occupies residues 667–777 (STSGFTPSGG…AGATVESTAC (111 aa)). Thr672 is modified (phosphothreonine). Residues Ser694 and Ser695 each carry the phosphoserine modification. The short motif at 705 to 711 (VRKKRKP) is the Nuclear localization signal element. Positions 710–728 (KPEEESPRKDDAKKAKQEP) are enriched in basic and acidic residues. A Phosphoserine modification is found at Ser715. Residue Lys725 forms a Glycyl lysine isopeptide (Lys-Gly) (interchain with G-Cter in SUMO1) linkage. At Ser734 the chain carries Phosphoserine.

This sequence belongs to the NASP family. As to quaternary structure, binds to linker H1 histones. Interacts with histones H2A, H2B, H3 and H4. Interacts with histone H3.3. Interacts with histones H3 and H4; NASP is a histone chaperone that stabilizes and maintains a soluble pool of histone H3-H4 dimers. Interacts with ASF1A and ASF1B; the interaction is probably indirect and mediated by H3-H4. Also binds to HSP90 in the cytoplasm. This interaction stimulates binding of NASP to H1-6/H1T.

Its subcellular location is the cytoplasm. It localises to the nucleus. Its function is as follows. Component of the histone chaperone network. Binds and stabilizes histone H3-H4 not bound to chromatin to maintain a soluble reservoir and modulate degradation by chaperone-mediated autophagy. Required for DNA replication, normal cell cycle progression and cell proliferation. Forms a cytoplasmic complex with HSP90 and H1 linker histones and stimulates HSP90 ATPase activity. NASP and H1 histone are subsequently released from the complex and translocate to the nucleus where the histone is released for binding to DNA. The chain is Nuclear autoantigenic sperm protein from Bos taurus (Bovine).